Consider the following 66-residue polypeptide: uncharacterized protein (66 aa).

A helical membrane pass occupies residues 32 to 49 (WAFSLLIAGSAFLWIYMR).

The protein localises to the membrane. This is an uncharacterized protein from Bacillus subtilis (strain 168).